Consider the following 2549-residue polypeptide: Serine/threonine-protein kinase mTOR (2549 aa).

The residue at position 1 (Met1) is an N-acetylmethionine. Residues 1-651 are interaction with NBN; that stretch reads MLGTGPAVAT…HVVSQTAVQV (651 aa). 32 HEAT repeats span residues 16–53, 55–99, 100–137, 138–179, 180–220, 222–276, 277–313, 314–364, 365–409, 410–445, 446–494, 495–529, 530–563, 564–596, 597–636, 637–683, 686–724, 727–766, 769–811, 814–853, 857–893, 894–942, 943–988, 989–1027, 1029–1068, 1069–1105, 1106–1144, 1145–1188, 1189–1225, 1226–1273, 1274–1311, and 1312–1345; these read SSNV…MELR, MSQE…VEGG, NSTR…AMAG, DTFT…AISV, PTFF…LILT, QREP…RISS, MEGE…PRHI, TPFT…CCRD, LMEE…AFTD, TQYL…VAVR, SEFK…RAMG, PGIQ…RQIP, QLKK…GLAH, QLAS…EFEG, HSLT…SIHL, ISGH…DERF, HLAQ…MNPA, MPFL…NAPR, RPYM…VSGL, RKWV…STGY, PYRK…LLGA, LDPY…GNLP, LDEF…KCVQ, FLPQ…KSHI, PYMD…GEFK, LYLP…LFGA, NLDD…RLTE, SLDF…GKKY, QIFI…LADE, EEDP…GAAR, RVSK…QAYN, and PMAR…ELAL. Residue Ser567 is modified to Phosphoserine. The residue at position 1162 (Thr1162) is a Phosphothreonine. Residue Lys1218 is modified to N6-acetyllysine. Ser1261 is subject to Phosphoserine. 16 TPR repeats span residues 1346–1382, 1383–1408, 1409–1442, 1443–1473, 1474–1507, 1508–1541, 1542–1574, 1575–1614, 1615–1649, 1650–1693, 1694–1731, 1732–1786, 1787–1846, 1898–1930, 1931–1970, and 1971–2005; these read TSQD…GIVL, LGER…QKGP, TPAI…HFGE, LEIQ…NKED, PELM…VNDE, TQAK…RDTH, DGAF…LDAE, LTAM…RREI, IRQI…PHED, MRTW…PTAH, PQVT…AQHA, IATE…DRSW, YKAW…STEG, NNLQ…VKAI, QIDT…YHPQ, and ALIY…SNTL. In terms of domain architecture, FAT spans 1382-1982; it reads LLGERAAKCR…IYPLTVASKS (601 aa). Residues Lys1662, Lys1702, and Arg1749 each coordinate 1D-myo-inositol hexakisphosphate. The span at 1825-1860 shows a compositional bias: low complexity; that stretch reads ITNATTAATTAASAAAATSTEGSNSESEAESNENSP. Positions 1825-1867 are disordered; it reads ITNATTAATTAASAAAATSTEGSNSESEAESNENSPTPSPLQK. Residues 2012 to 2144 are sufficient for interaction with the FKBP1A/rapamycin complex; that stretch reads VSEELIRVAI…DLELAVPGTY (133 aa). Lys2066 is covalently cross-linked (Glycyl lysine isopeptide (Lys-Gly) (interchain with G-Cter in ubiquitin)). One can recognise a PI3K/PI4K catalytic domain in the interval 2156-2469; that stretch reads IAPSLQVITS…GVELGEPAHK (314 aa). At Ser2159 the chain carries Phosphoserine; by TBK1. The segment at 2162 to 2168 is G-loop; it reads VITSKQR. Thr2164 bears the Phosphothreonine mark. 2 residues coordinate ATP: Ser2165 and Gln2167. At Thr2173 the chain carries Phosphothreonine; by PKB/AKT1. Residues Leu2185, Lys2187, Glu2190, Tyr2225, Gly2238, Trp2239, Val2240, and Thr2245 each coordinate ATP. The segment at 2258–2296 is interaction with MLST8; sequence KILLNIEHRIMLRMAPDYDHLTLMQKVEVFEHAVNNTAG. Residues 2335-2343 form a catalytic loop region; it reads GLGDRHPSN. Asn2343 serves as a coordination point for Mg(2+). The ATP site is built by Met2345 and Ile2356. The segment at 2355 to 2380 is activation loop; the sequence is HIDFGDCFEVAMTREKFPEKIPFRLT. Asp2357 provides a ligand contact to Mg(2+). A Phosphothreonine; by RPS6KB1 modification is found at Thr2446. Ser2448 carries the post-translational modification Phosphoserine; by RPS6KB1. A phosphoserine mark is found at Ser2478 and Ser2481. The region spanning 2517-2549 is the FATC domain; that stretch reads DTLDVPTQVELLIKQATSHENLCQCYIGWCPFW.

The protein belongs to the PI3/PI4-kinase family. In terms of assembly, part of the mechanistic target of rapamycin complex 1 (mTORC1) which contains MTOR, MLST8 and RPTOR. The mTORC1 complex is a 1 Md obligate dimer of two stoichiometric heterotetramers with overall dimensions of 290 A x 210 A x 135 A. It has a rhomboid shape and a central cavity, the dimeric interfaces are formed by interlocking interactions between the two MTOR and the two RPTOR subunits. The MLST8 subunit forms distal foot-like protuberances, and contacts only one MTOR within the complex, while the small AKT1S1/PRAS40 localizes to the midsection of the central core, in close proximity to RPTOR. mTORC1 associates with AKT1S1/PRAS40, which inhibits its activity by blocking MTOR substrate-recruitment site. Component of the mechanistic target of rapamycin complex 2 (mTORC2), consisting in two heterotretramers composed of MTOR, MLST8, RICTOR and MAPKAP1/SIN1. Interacts with PLPP7 and PML. Interacts with PRR5 and RICTOR; the interaction is direct within the mTORC2 complex and interaction with RICTOR is enhanced by deubiquitination of RICTOR by USP9X. mTORC1 and mTORC2 associate with DEPTOR, which regulates their activity. Interacts with WAC; WAC positively regulates MTOR activity by promoting the assembly of the TTT complex composed of TELO2, TTI1 and TTI2 and the RUVBL complex composed of RUVBL1 and RUVBL2 into the TTT-RUVBL complex which leads to the dimerization of the mTORC1 complex and its subsequent activation. Interacts with UBQLN1. Interacts with TTI1 and TELO2. Interacts with CLIP1; phosphorylates and regulates CLIP1. Interacts with NBN. Interacts with HTR6. Interacts with BRAT1. Interacts with MEAK7 (via C-terminal domain); the interaction increases upon nutrient stimulation. Interacts with TM4SF5; the interaction is positively regulated by arginine and is negatively regulated by leucine. Interacts with GPR137B. Interacts with NCKAP1L. Interacts with TPCN1 and TPCN2; the interaction is required for TPCN1 and TPCN2 sensitivity to ATP. Interacts with ATP6V1A and with CRYAB, forming a ternary complex. Interacts with SLC38A7; this interaction mediates the recruitment of mTORC1 to the lysosome and its subsequent activation. Interacts with TSPAN8. Autophosphorylates when part of mTORC1 or mTORC2. Phosphorylation at Ser-1261, Ser-2159 and Thr-2164 promotes autophosphorylation. Phosphorylated at Ser-2448 by RPS6KB1. Phosphorylation in the kinase domain modulates the interactions of MTOR with RPTOR and AKT1S1/PRAS40 and leads to increased intrinsic mTORC1 kinase activity. Phosphorylation at Ser-2159 by TBK1 in response to growth factors and pathogen recognition receptors promotes mTORC1 activity. Phosphorylation at Ser-2159 by TBK1 in response to EGF growth factor promotes mTORC2 activity, leading to AKT1 phosphorylation and activation. Phosphorylation at Thr-2173 in the ATP-binding region by AKT1 strongly reduces kinase activity. Post-translationally, ubiquitinated at Lys-2066 by the SCF(FBXO22) complex via 'Lys-27'-linked ubiquitination prevents mTORC1 substrate recruitment.

The protein localises to the lysosome membrane. Its subcellular location is the endoplasmic reticulum membrane. It localises to the golgi apparatus membrane. It is found in the cell membrane. The protein resides in the mitochondrion outer membrane. The protein localises to the cytoplasm. Its subcellular location is the nucleus. It localises to the PML body. It is found in the microsome membrane. The protein resides in the cytoplasmic vesicle. The protein localises to the phagosome. The catalysed reaction is L-seryl-[protein] + ATP = O-phospho-L-seryl-[protein] + ADP + H(+). The enzyme catalyses L-threonyl-[protein] + ATP = O-phospho-L-threonyl-[protein] + ADP + H(+). It catalyses the reaction L-tyrosyl-[protein] + ATP = O-phospho-L-tyrosyl-[protein] + ADP + H(+). With respect to regulation, the mTORC1 complex is activated in response to nutrients, growth factors or amino acids: activation requires relocalization of the mTORC1 complex to lysosomes that is mediated by the Ragulator complex, SLC38A9, and the Rag GTPases RagA/RRAGA, RagB/RRAGB, RagC/RRAGC and RagD/RRAGD. Activation of mTORC1 by growth factors such as insulin involves AKT1-mediated phosphorylation of TSC1-TSC2, which leads to the activation of the RHEB GTPase a potent activator of the protein kinase activity of mTORC1. Insulin-stimulated and amino acid-dependent phosphorylation at Ser-1261 promotes autophosphorylation and the activation of mTORC1. On the other hand, low cellular energy levels can inhibit mTORC1 through activation of PRKAA1 while hypoxia inhibits mTORC1 through a REDD1-dependent mechanism which may also require PRKAA1. The kinase activity of MTOR within the mTORC1 complex is positively regulated by MLST8. The kinase activity of MTOR is inhibited by DEPTOR and AKT1S1. The non-canonical mTORC1 complex is independent of the RHEB GTPase and specifically mediates phosphorylation of MiT/TFE factors TFEB and TFE3 but not other mTORC1 substrates: it is activated by FLCN, which activates Rag GTPases RagC/RRAGC and RagD/RRAGD. MTOR is the target of the immunosuppressive and anti-cancer drug rapamycin which acts in complex with FKBP1A/FKBP12, and specifically inhibits its kinase activity. mTORC2 is also activated by growth factors, but seems to be nutrient-insensitive. mTORC2 associates and is directly activated by ribosomes. mTORC2 may also be regulated by RHEB but in an indirect manner through the PI3K signaling pathway. In terms of biological role, serine/threonine protein kinase which is a central regulator of cellular metabolism, growth and survival in response to hormones, growth factors, nutrients, energy and stress signals. MTOR directly or indirectly regulates the phosphorylation of at least 800 proteins. Functions as part of 2 structurally and functionally distinct signaling complexes mTORC1 and mTORC2 (mTOR complex 1 and 2). In response to nutrients, growth factors or amino acids, mTORC1 is recruited to the lysosome membrane and promotes protein, lipid and nucleotide synthesis by phosphorylating key regulators of mRNA translation and ribosome synthesis. This includes phosphorylation of EIF4EBP1 and release of its inhibition toward the elongation initiation factor 4E (eiF4E). Moreover, phosphorylates and activates RPS6KB1 and RPS6KB2 that promote protein synthesis by modulating the activity of their downstream targets including ribosomal protein S6, eukaryotic translation initiation factor EIF4B, and the inhibitor of translation initiation PDCD4. Stimulates the pyrimidine biosynthesis pathway, both by acute regulation through RPS6KB1-mediated phosphorylation of the biosynthetic enzyme CAD, and delayed regulation, through transcriptional enhancement of the pentose phosphate pathway which produces 5-phosphoribosyl-1-pyrophosphate (PRPP), an allosteric activator of CAD at a later step in synthesis, this function is dependent on the mTORC1 complex. Regulates ribosome synthesis by activating RNA polymerase III-dependent transcription through phosphorylation and inhibition of MAF1 an RNA polymerase III-repressor. Activates dormant ribosomes by mediating phosphorylation of SERBP1, leading to SERBP1 inactivation and reactivation of translation. In parallel to protein synthesis, also regulates lipid synthesis through SREBF1/SREBP1 and LPIN1. To maintain energy homeostasis mTORC1 may also regulate mitochondrial biogenesis through regulation of PPARGC1A. In the same time, mTORC1 inhibits catabolic pathways: negatively regulates autophagy through phosphorylation of ULK1. Under nutrient sufficiency, phosphorylates ULK1 at 'Ser-758', disrupting the interaction with AMPK and preventing activation of ULK1. Also prevents autophagy through phosphorylation of the autophagy inhibitor DAP. Also prevents autophagy by phosphorylating RUBCNL/Pacer under nutrient-rich conditions. Prevents autophagy by mediating phosphorylation of AMBRA1, thereby inhibiting AMBRA1 ability to mediate ubiquitination of ULK1 and interaction between AMBRA1 and PPP2CA. mTORC1 exerts a feedback control on upstream growth factor signaling that includes phosphorylation and activation of GRB10 a INSR-dependent signaling suppressor. Among other potential targets mTORC1 may phosphorylate CLIP1 and regulate microtubules. The mTORC1 complex is inhibited in response to starvation and amino acid depletion. The non-canonical mTORC1 complex, which acts independently of RHEB, specifically mediates phosphorylation of MiT/TFE factors TFEB and TFE3 in the presence of nutrients, promoting their cytosolic retention and inactivation. Upon starvation or lysosomal stress, inhibition of mTORC1 induces dephosphorylation and nuclear translocation of TFEB and TFE3, promoting their transcription factor activity. The mTORC1 complex regulates pyroptosis in macrophages by promoting GSDMD oligomerization. MTOR phosphorylates RPTOR which in turn inhibits mTORC1. As part of the mTORC2 complex, MTOR transduces signals from growth factors to pathways involved in proliferation, cytoskeletal organization, lipogenesis and anabolic output. In response to growth factors, mTORC2 phosphorylates and activates AGC protein kinase family members, including AKT (AKT1, AKT2 and AKT3), PKC (PRKCA, PRKCB and PRKCE) and SGK1. In contrast to mTORC1, mTORC2 is nutrient-insensitive. mTORC2 plays a critical role in AKT1 activation by mediating phosphorylation of different sites depending on the context, such as 'Thr-450', 'Ser-473', 'Ser-477' or 'Thr-479', facilitating the phosphorylation of the activation loop of AKT1 on 'Thr-308' by PDPK1/PDK1 which is a prerequisite for full activation. mTORC2 also regulates the phosphorylation of SGK1 at 'Ser-422'. mTORC2 may regulate the actin cytoskeleton, through phosphorylation of PRKCA, PXN and activation of the Rho-type guanine nucleotide exchange factors RHOA and RAC1A or RAC1B. The mTORC2 complex also phosphorylates various proteins involved in insulin signaling, such as FBXW8 and IGF2BP1. May also regulate insulin signaling by acting as a tyrosine protein kinase that catalyzes phosphorylation of IGF1R and INSR. Regulates osteoclastogenesis by adjusting the expression of CEBPB isoforms. Plays an important regulatory role in the circadian clock function; regulates period length and rhythm amplitude of the suprachiasmatic nucleus (SCN) and liver clocks. The chain is Serine/threonine-protein kinase mTOR from Mus musculus (Mouse).